Consider the following 336-residue polypeptide: SCP domain-containing protein 1 (336 aa).

The signal sequence occupies residues 1–18 (MEFKLLLVLCFNIGLICS). The N-linked (GlcNAc...) asparagine glycan is linked to Asn47. The segment covering 73-85 (QGGNTAPSSSLPG) has biased composition (polar residues). The interval 73–94 (QGGNTAPSSSLPGVSSMPMPSA) is disordered. In terms of domain architecture, SCP spans 175-292 (LEEHNKFRSD…YCGDMSFIAC (118 aa)). N-linked (GlcNAc...) asparagine glycans are attached at residues Asn213 and Asn257.

Component of the acid-insoluble and acid-soluble organic matrix of calcified layers of the shell (at protein level).

The protein resides in the secreted. The sequence is that of SCP domain-containing protein 1 from Lottia gigantea (Giant owl limpet).